Here is a 259-residue protein sequence, read N- to C-terminus: Probable UMP-CMP kinase 2 (259 aa).

63–68 (GSGKGT) provides a ligand contact to ATP. The NMP stretch occupies residues 83 to 112 (SAGDLLRREIAMHTENGAMILNLIKDGKIV). Residues Arg-89, 110–112 (KIV), and 137–140 (GFPR) contribute to the a ribonucleoside 5'-phosphate site. A CMP-binding site is contributed by Asn-144. The segment at 175 to 183 (NRNQGRIDD) is LID. Arg-176 provides a ligand contact to ATP. Arg-180 and Arg-191 together coordinate a ribonucleoside 5'-phosphate. Gly-219 serves as a coordination point for ATP.

This sequence belongs to the adenylate kinase family. UMP-CMP kinase subfamily. Monomer. The cofactor is Mg(2+).

The protein resides in the cytoplasm. It localises to the nucleus. It carries out the reaction CMP + ATP = CDP + ADP. It catalyses the reaction dCMP + ATP = dCDP + ADP. The catalysed reaction is UMP + ATP = UDP + ADP. Functionally, catalyzes the phosphorylation of pyrimidine nucleoside monophosphates at the expense of ATP. Plays an important role in de novo pyrimidine nucleotide biosynthesis. Has preference for UMP and CMP as phosphate acceptors. The protein is Probable UMP-CMP kinase 2 (UMK2) of Arabidopsis thaliana (Mouse-ear cress).